Reading from the N-terminus, the 354-residue chain is Biotin synthase (354 aa).

The Radical SAM core domain maps to 41-268 (NEVQISRLLS…LSRVRLSAGR (228 aa)). Cysteine 56, cysteine 60, and cysteine 63 together coordinate [4Fe-4S] cluster. Positions 100, 131, 191, and 263 each coordinate [2Fe-2S] cluster.

The protein belongs to the radical SAM superfamily. Biotin synthase family. In terms of assembly, homodimer. Requires [4Fe-4S] cluster as cofactor. The cofactor is [2Fe-2S] cluster.

The catalysed reaction is (4R,5S)-dethiobiotin + (sulfur carrier)-SH + 2 reduced [2Fe-2S]-[ferredoxin] + 2 S-adenosyl-L-methionine = (sulfur carrier)-H + biotin + 2 5'-deoxyadenosine + 2 L-methionine + 2 oxidized [2Fe-2S]-[ferredoxin]. Its pathway is cofactor biosynthesis; biotin biosynthesis; biotin from 7,8-diaminononanoate: step 2/2. Its function is as follows. Catalyzes the conversion of dethiobiotin (DTB) to biotin by the insertion of a sulfur atom into dethiobiotin via a radical-based mechanism. This chain is Biotin synthase, found in Shewanella amazonensis (strain ATCC BAA-1098 / SB2B).